The chain runs to 360 residues: MAALSLKGVRKSYGGAQYVLHGIDVDIADGEFVVLVGPSGCGKSTLLRMIAGLETVTEGEIAIGGRVVNALEPKDRDIAMVFQNYALYPHMTVAQNMGYGLKIRGVERALIDARVQAAAQILELGPLLARRPRELSGGQRQRVAMGRAIVREPSVFLFDEPLSNLDAKLRVQMRLEIQRLHARLATTSVYVTHDQIEAMTLAQRVIVMNRGYAEQIGAPVDVYEKPATTFVASFIGSPAMNLLHGRLSEDGAAFDVADGPRLPVAGSAGAGRGIAPGREWILGVRPEHMTPQPGEAFATLAVDSCELLGADNLAHGRWGAHDVAVRLPHAMRPTRGETLPVALPARHLHFFDPATGKRAG.

Residues Leu4–Ile235 form the ABC transporter domain. Residue Gly37–Ser44 participates in ATP binding.

This sequence belongs to the ABC transporter superfamily. sn-glycerol-3-phosphate importer (TC 3.A.1.1.3) family. In terms of assembly, the complex is composed of two ATP-binding proteins (UgpC), two transmembrane proteins (UgpA and UgpE) and a solute-binding protein (UgpB).

The protein resides in the cell inner membrane. The catalysed reaction is sn-glycerol 3-phosphate(out) + ATP + H2O = sn-glycerol 3-phosphate(in) + ADP + phosphate + H(+). Functionally, part of the ABC transporter complex UgpBAEC involved in sn-glycerol-3-phosphate (G3P) import. Responsible for energy coupling to the transport system. This Burkholderia pseudomallei (strain 1710b) protein is sn-glycerol-3-phosphate import ATP-binding protein UgpC.